The sequence spans 349 residues: Phosphoribosylformylglycinamidine cyclo-ligase (349 aa).

This sequence belongs to the AIR synthase family.

The protein resides in the cytoplasm. The enzyme catalyses 2-formamido-N(1)-(5-O-phospho-beta-D-ribosyl)acetamidine + ATP = 5-amino-1-(5-phospho-beta-D-ribosyl)imidazole + ADP + phosphate + H(+). It participates in purine metabolism; IMP biosynthesis via de novo pathway; 5-amino-1-(5-phospho-D-ribosyl)imidazole from N(2)-formyl-N(1)-(5-phospho-D-ribosyl)glycinamide: step 2/2. The polypeptide is Phosphoribosylformylglycinamidine cyclo-ligase (Psychrobacter cryohalolentis (strain ATCC BAA-1226 / DSM 17306 / VKM B-2378 / K5)).